Reading from the N-terminus, the 294-residue chain is 4-hydroxy-tetrahydrodipicolinate synthase (294 aa).

Threonine 45 is a pyruvate binding site. The active-site Proton donor/acceptor is the tyrosine 133. Lysine 162 acts as the Schiff-base intermediate with substrate in catalysis. Isoleucine 204 is a pyruvate binding site.

Belongs to the DapA family. Homotetramer; dimer of dimers.

Its subcellular location is the cytoplasm. It catalyses the reaction L-aspartate 4-semialdehyde + pyruvate = (2S,4S)-4-hydroxy-2,3,4,5-tetrahydrodipicolinate + H2O + H(+). It participates in amino-acid biosynthesis; L-lysine biosynthesis via DAP pathway; (S)-tetrahydrodipicolinate from L-aspartate: step 3/4. In terms of biological role, catalyzes the condensation of (S)-aspartate-beta-semialdehyde [(S)-ASA] and pyruvate to 4-hydroxy-tetrahydrodipicolinate (HTPA). In Bartonella tribocorum (strain CIP 105476 / IBS 506), this protein is 4-hydroxy-tetrahydrodipicolinate synthase.